We begin with the raw amino-acid sequence, 1096 residues long: Cohesin subunit scc-3 (1096 aa).

Positions 1 to 21 (MSETPTDQSPQRMSTRNQARV) are enriched in polar residues. Disordered regions lie at residues 1–53 (MSET…KKRA) and 67–106 (NLNN…ESAE). A coiled-coil region spans residues 261–312 (IELTQSKEKTSKQIEAEKAKLKNNSAGNEKYEALVAQRTQTEERAEEIRQII). The region spanning 320–405 (FVHRYRDVVP…NKFKDRLVSM (86 aa)) is the SCD domain. The segment at 1057-1096 (DNMSVRSGMTVTSNATMRSTASSTRGRGRGRGRSRIADDF) is disordered. Positions 1060–1073 (SVRSGMTVTSNATM) are enriched in polar residues.

This sequence belongs to the SCC3 family. As to quaternary structure, component of the cohesin complex, composed of the smc-1 and smc-3 heterodimer attached via their hinge domain, scc-1 which links them, and scc-3. Interacts with scc-1, smc-1 and tim-1. As to expression, expressed in gonadal cells.

It is found in the nucleus. The protein resides in the chromosome. Component of the cohesin complex, a complex required for the cohesion of sister chromatids after DNA replication. The cohesin complex apparently forms a large proteinaceous ring within which sister chromatids can be trapped. At anaphase, the scc-1 subunit of the complex is cleaved and dissociates from chromatin, allowing sister chromatids to segregate. The cohesin complex may also play a role in spindle pole assembly during mitosis. Plays an essential role in cell division during embryonic development. Required for the assembly of the synaptonemal complex between homologous chromosomes to promote sister chromatid cohesion during mitosis and meiosis. Has a role in stabilization of homologous chromosome associations during meiotic synapsis. Required for chromosome segregation during mitosis and meiosis. Plays a role in DNA double-strand break (DSB) repair during meiotic recombination and promotes the assembly of the 9-1-1 cell-cycle checkpoint response complex which is required for inducing apoptosis in response to DNA damage, at DNA damage sites. The polypeptide is Cohesin subunit scc-3 (Caenorhabditis elegans).